A 237-amino-acid polypeptide reads, in one-letter code: Protein GrpE (237 aa).

2 disordered regions span residues 1–52 and 200–237; these read MSGD…RLQQ and KVSM…QPGV. The span at 27-40 shows a compositional bias: polar residues; sequence ASINSDEGQSSAQS. Residues 204–218 are compositionally biased toward low complexity; it reads GPGPQSGASPSSAQP.

It belongs to the GrpE family. As to quaternary structure, homodimer.

The protein localises to the cytoplasm. Functionally, participates actively in the response to hyperosmotic and heat shock by preventing the aggregation of stress-denatured proteins, in association with DnaK and GrpE. It is the nucleotide exchange factor for DnaK and may function as a thermosensor. Unfolded proteins bind initially to DnaJ; upon interaction with the DnaJ-bound protein, DnaK hydrolyzes its bound ATP, resulting in the formation of a stable complex. GrpE releases ADP from DnaK; ATP binding to DnaK triggers the release of the substrate protein, thus completing the reaction cycle. Several rounds of ATP-dependent interactions between DnaJ, DnaK and GrpE are required for fully efficient folding. This Prochlorococcus marinus (strain MIT 9313) protein is Protein GrpE.